The primary structure comprises 369 residues: 3-dehydroquinate synthase (369 aa).

NAD(+) contacts are provided by residues 80 to 85, 114 to 118, 138 to 139, lysine 151, lysine 160, and 178 to 181; these read DGEQYK, GVIGD, TT, and TLKT. Positions 193, 256, and 273 each coordinate Zn(2+).

Belongs to the sugar phosphate cyclases superfamily. Dehydroquinate synthase family. It depends on Co(2+) as a cofactor. Zn(2+) serves as cofactor. Requires NAD(+) as cofactor.

It localises to the cytoplasm. The enzyme catalyses 7-phospho-2-dehydro-3-deoxy-D-arabino-heptonate = 3-dehydroquinate + phosphate. It participates in metabolic intermediate biosynthesis; chorismate biosynthesis; chorismate from D-erythrose 4-phosphate and phosphoenolpyruvate: step 2/7. Its function is as follows. Catalyzes the conversion of 3-deoxy-D-arabino-heptulosonate 7-phosphate (DAHP) to dehydroquinate (DHQ). The chain is 3-dehydroquinate synthase from Psychrobacter cryohalolentis (strain ATCC BAA-1226 / DSM 17306 / VKM B-2378 / K5).